The sequence spans 596 residues: Malto-oligosyltrehalose trehalohydrolase (596 aa).

263-268 (RLDAVH) contributes to the substrate binding site. The active-site Nucleophile is the Asp265. Glu302 functions as the Proton donor in the catalytic mechanism. Substrate is bound by residues 327–331 (DDFHH) and 397–402 (HDQIGN).

It belongs to the glycosyl hydrolase 13 family.

It is found in the cytoplasm. The enzyme catalyses hydrolysis of (1-&gt;4)-alpha-D-glucosidic linkage in 4-alpha-D-[(1-&gt;4)-alpha-D-glucanosyl]n trehalose to yield trehalose and (1-&gt;4)-alpha-D-glucan.. The protein operates within glycan biosynthesis; trehalose biosynthesis. This Rhizobium sp. (strain M-11) protein is Malto-oligosyltrehalose trehalohydrolase (treZ).